Consider the following 172-residue polypeptide: Large ribosomal subunit protein uL10 (172 aa).

This sequence belongs to the universal ribosomal protein uL10 family. In terms of assembly, part of the ribosomal stalk of the 50S ribosomal subunit. The N-terminus interacts with L11 and the large rRNA to form the base of the stalk. The C-terminus forms an elongated spine to which L12 dimers bind in a sequential fashion forming a multimeric L10(L12)X complex.

Functionally, forms part of the ribosomal stalk, playing a central role in the interaction of the ribosome with GTP-bound translation factors. The polypeptide is Large ribosomal subunit protein uL10 (rplJ) (Liberibacter africanus subsp. capensis).